The sequence spans 1294 residues: Disease resistance protein L6 (1294 aa).

The signal sequence occupies residues 1 to 29 (MSYLREVATAVALLLPFILLNKFWRPNSK). The disordered stretch occupies residues 34-54 (NDDDDSTSEVDAISDSTNPSG). One can recognise a TIR domain in the interval 59–221 (VEYEVFLSFR…AIADKVSADI (163 aa)). Residues 68 to 73 (RGPDTR) and glycine 101 contribute to the NAD(+) site. Glutamate 135 is an active-site residue. The 240-residue stretch at 241-480 (DDHITAVLEK…VYDRLKISYD (240 aa)) folds into the NB-ARC domain. 11 LRR repeats span residues 246-268 (AVLE…GMGG), 468-492 (LDEV…IFLD), 604-625 (LSEL…NNLL), 626-650 (PNLK…NYTM), 904-928 (LENL…GLQG), 1012-1039 (FPML…SLEE), 1063-1085 (LQKL…LEEL), 1086-1109 (KSLQ…KLKE), 1179-1203 (LEEL…SFLS), 1205-1229 (LQKL…ELKS), and 1254-1278 (LKNL…ALKT).

This sequence belongs to the disease resistance TIR-NB-LRR family. In terms of assembly, homooligomer; homooligomerization is required for activity.

It carries out the reaction NAD(+) + H2O = ADP-D-ribose + nicotinamide + H(+). The enzyme catalyses NADP(+) + H2O = ADP-D-ribose 2'-phosphate + nicotinamide + H(+). The catalysed reaction is NAD(+) = 2'cADPR + nicotinamide + H(+). Its function is as follows. TIR-NB-LRR receptor-like protein that confers resistance to the flax rust phytopathogenic fungus (M.lini). An NAD(+) hydrolase (NADase): in response to activation, catalyzes cleavage of NAD(+) into ADP-D-ribose (ADPR) and nicotinamide; NAD(+) cleavage triggering a defense system that promotes cell death. Also able to hydrolyze NADP(+), but not other NAD(+)-related molecules. Makes small amounts of 2' cyclic ADPR (2'cADPR). This is Disease resistance protein L6 from Linum usitatissimum (Flax).